The primary structure comprises 137 residues: Peptide methionine sulfoxide reductase MsrB (137 aa).

A MsrB domain is found at Pro7–Asp129. Cys46, Cys49, Cys95, and Cys98 together coordinate Zn(2+). The active-site Nucleophile is Cys118.

It belongs to the MsrB Met sulfoxide reductase family. The cofactor is Zn(2+).

It catalyses the reaction L-methionyl-[protein] + [thioredoxin]-disulfide + H2O = L-methionyl-(R)-S-oxide-[protein] + [thioredoxin]-dithiol. The polypeptide is Peptide methionine sulfoxide reductase MsrB (Yersinia enterocolitica serotype O:8 / biotype 1B (strain NCTC 13174 / 8081)).